Reading from the N-terminus, the 166-residue chain is 2-C-methyl-D-erythritol 2,4-cyclodiphosphate synthase (166 aa).

A divalent metal cation-binding residues include D12 and H14. Residues 12 to 14 (DVH) and 38 to 39 (HS) each bind 4-CDP-2-C-methyl-D-erythritol 2-phosphate. H46 is an a divalent metal cation binding site. 4-CDP-2-C-methyl-D-erythritol 2-phosphate-binding positions include 60 to 62 (DIG), 136 to 139 (TTSE), F143, and R146.

Belongs to the IspF family. As to quaternary structure, homotrimer. The cofactor is a divalent metal cation.

It carries out the reaction 4-CDP-2-C-methyl-D-erythritol 2-phosphate = 2-C-methyl-D-erythritol 2,4-cyclic diphosphate + CMP. Its pathway is isoprenoid biosynthesis; isopentenyl diphosphate biosynthesis via DXP pathway; isopentenyl diphosphate from 1-deoxy-D-xylulose 5-phosphate: step 4/6. In terms of biological role, involved in the biosynthesis of isopentenyl diphosphate (IPP) and dimethylallyl diphosphate (DMAPP), two major building blocks of isoprenoid compounds. Catalyzes the conversion of 4-diphosphocytidyl-2-C-methyl-D-erythritol 2-phosphate (CDP-ME2P) to 2-C-methyl-D-erythritol 2,4-cyclodiphosphate (ME-CPP) with a corresponding release of cytidine 5-monophosphate (CMP). This is 2-C-methyl-D-erythritol 2,4-cyclodiphosphate synthase from Xanthomonas axonopodis pv. citri (strain 306).